The primary structure comprises 260 residues: Glutathione S-transferase domain-containing protein DDB_G0280881 (260 aa).

The GST N-terminal domain occupies lysine 7–leucine 96. Residues asparagine 102 to phenylalanine 228 form the GST C-terminal domain.

It belongs to the GST superfamily.

This is Glutathione S-transferase domain-containing protein DDB_G0280881 from Dictyostelium discoideum (Social amoeba).